Consider the following 519-residue polypeptide: Keratin, type II cytoskeletal 1b (519 aa).

Residues 1–166 (MSRQFSSQSA…DPEIQKIKTQ (166 aa)) form a head region. R81 and R95 each carry omega-N-methylarginine. Residues 167–202 (EREQIKTLNNKFASFIDKVRFLEQQNQVLQTKWELL) form a coil 1A region. The IF rod domain maps to 167–480 (EREQIKTLNN…ELLEGEESRM (314 aa)). The segment at 203–221 (QQVNTSTRTSSLEPIFEEF) is linker 1. Positions 222 to 313 (INQLQRQVDV…YLFDTELSQI (92 aa)) are coil 1B. A linker 12 region spans residues 314–337 (QTHVSDTNVILSMDNNRSLDLDSI). The tract at residues 338–476 (INAVRTQYEL…ATYRELLEGE (139 aa)) is coil 2. The segment at 477–519 (ESRMSGALQSQVSIWALPSNEGNDLGERLHDPQSQVPVPKLGC) is tail. A disordered region spans residues 499-519 (NDLGERLHDPQSQVPVPKLGC).

Belongs to the intermediate filament family. Post-translationally, undergoes deimination of some arginine residues (citrullination).

The protein is Keratin, type II cytoskeletal 1b (Krt77) of Rattus norvegicus (Rat).